A 232-amino-acid chain; its full sequence is Ion-translocating oxidoreductase complex subunit E (232 aa).

The next 6 membrane-spanning stretches (helical) occupy residues 18–38, 39–59, 69–89, 93–113, 127–147, and 182–202; these read GLVQ…LTNA, LGLG…VSLV, IPVF…LINA, GLYL…IIIG, AAFD…VLGA, and PFLL…LIAL.

This sequence belongs to the NqrDE/RnfAE family. As to quaternary structure, the complex is composed of six subunits: RnfA, RnfB, RnfC, RnfD, RnfE and RnfG.

The protein localises to the cell inner membrane. In terms of biological role, part of a membrane-bound complex that couples electron transfer with translocation of ions across the membrane. The polypeptide is Ion-translocating oxidoreductase complex subunit E (Shewanella sp. (strain ANA-3)).